The following is a 453-amino-acid chain: DNA repair protein RadA (453 aa).

Residues 10 to 27 (CTECGATFPKWAGQCADC) form a C4-type zinc finger. 96–103 (GDPGIGKS) contributes to the ATP binding site. The RadA KNRFG motif signature appears at 252–256 (KNRFG). The interval 351–453 (DVFLNVVGGV…LEQALDALFE (103 aa)) is lon-protease-like.

It belongs to the RecA family. RadA subfamily.

Functionally, DNA-dependent ATPase involved in processing of recombination intermediates, plays a role in repairing DNA breaks. Stimulates the branch migration of RecA-mediated strand transfer reactions, allowing the 3' invading strand to extend heteroduplex DNA faster. Binds ssDNA in the presence of ADP but not other nucleotides, has ATPase activity that is stimulated by ssDNA and various branched DNA structures, but inhibited by SSB. Does not have RecA's homology-searching function. The polypeptide is DNA repair protein RadA (Pseudomonas aeruginosa (strain ATCC 15692 / DSM 22644 / CIP 104116 / JCM 14847 / LMG 12228 / 1C / PRS 101 / PAO1)).